The following is a 174-amino-acid chain: ATP-dependent protease subunit HslV (174 aa).

The active site involves Thr2. Na(+) is bound by residues Gly157, Cys160, and Thr163.

The protein belongs to the peptidase T1B family. HslV subfamily. In terms of assembly, a double ring-shaped homohexamer of HslV is capped on each side by a ring-shaped HslU homohexamer. The assembly of the HslU/HslV complex is dependent on binding of ATP.

The protein localises to the cytoplasm. It carries out the reaction ATP-dependent cleavage of peptide bonds with broad specificity.. Allosterically activated by HslU binding. Protease subunit of a proteasome-like degradation complex believed to be a general protein degrading machinery. This is ATP-dependent protease subunit HslV from Shewanella oneidensis (strain ATCC 700550 / JCM 31522 / CIP 106686 / LMG 19005 / NCIMB 14063 / MR-1).